A 522-amino-acid chain; its full sequence is Ribonuclease Y (522 aa).

Residues 2–22 (WVEILVGSSAAIISGAAGYLL) form a helical membrane-spanning segment. Residues 212–278 (LINTVSIPSE…TKVIELLVED (67 aa)) enclose the KH domain. Residues 338–431 (ALGHSLEVAH…VCAADTLSAA (94 aa)) form the HD domain.

The protein belongs to the RNase Y family.

The protein localises to the cell membrane. Endoribonuclease that initiates mRNA decay. The polypeptide is Ribonuclease Y (Nitratiruptor sp. (strain SB155-2)).